A 388-amino-acid polypeptide reads, in one-letter code: Mannitol-1-phosphate 5-dehydrogenase (388 aa).

5-16 (AVHFGGGNIGRG) contributes to the NAD(+) binding site. The active site involves K213.

Belongs to the mannitol dehydrogenase family. As to quaternary structure, monomer.

It carries out the reaction D-mannitol 1-phosphate + NAD(+) = beta-D-fructose 6-phosphate + NADH + H(+). Catalyzes the NAD(H)-dependent interconversion of D-fructose 6-phosphate and D-mannitol 1-phosphate in the mannitol metabolic pathway. The chain is Mannitol-1-phosphate 5-dehydrogenase from Ajellomyces capsulatus (strain NAm1 / WU24) (Darling's disease fungus).